The following is a 645-amino-acid chain: Glucans biosynthesis glucosyltransferase H (645 aa).

The disordered stretch occupies residues 1–28; that stretch reads MDGTVTLSPAPTDLPPVSSLDAGQPTLP. 7 helical membrane-spanning segments follow: residues 64-84, 98-118, 423-443, 465-485, 504-524, 558-578, and 580-600; these read LIGG…SVLW, LFVL…AGFI, APMW…GAGI, AIWI…LGYI, ALSI…VMYL, SYGG…LVSP, and LAAW…VVAV.

It belongs to the glycosyltransferase 2 family. OpgH subfamily.

The protein localises to the cell inner membrane. Its pathway is glycan metabolism; osmoregulated periplasmic glucan (OPG) biosynthesis. In terms of biological role, involved in the biosynthesis of osmoregulated periplasmic glucans (OPGs). The chain is Glucans biosynthesis glucosyltransferase H from Xanthomonas campestris pv. campestris (strain B100).